The sequence spans 139 residues: Arsenate reductase (139 aa).

Catalysis depends on nucleophile residues Cys-10, Cys-82, and Cys-89. Intrachain disulfides connect Cys-10–Cys-82 and Cys-82–Cys-89.

This sequence belongs to the low molecular weight phosphotyrosine protein phosphatase family. Thioredoxin-coupled ArsC subfamily.

The protein resides in the cytoplasm. It catalyses the reaction arsenate + [thioredoxin]-dithiol + H(+) = arsenite + [thioredoxin]-disulfide + H2O. Functionally, catalyzes the reduction of arsenate [As(V)] to arsenite [As(III)]. The chain is Arsenate reductase from Shouchella clausii (strain KSM-K16) (Alkalihalobacillus clausii).